A 215-amino-acid polypeptide reads, in one-letter code: Ankyrin repeat domain-containing protein 49 (215 aa).

ANK repeat units lie at residues 81 to 110 (DGYTPLHRAAYNNFVDMAKLLLQYHANPNA) and 114 to 143 (LGWTPLHSACKWNNADCAHLLLQFGADVNA).

Interacts with Bdbt; interaction promotes the stability of both complex members.

Its subcellular location is the cytoplasm. It localises to the cytosol. The protein localises to the cell membrane. Required for regulating the establishment of planar cell polarity in the wing. Forms a complex with Bdbt which likely functions in the regulation of planar polarity by promoting the activity of Dco during planar polarity establishment. Within the complex, probably functions to stabilize Bdbt, while Bdbt directly promotes Dco activity in regulating phosphorylation of core proteins such as dsh, and asymmetric localization. The chain is Ankyrin repeat domain-containing protein 49 from Drosophila melanogaster (Fruit fly).